We begin with the raw amino-acid sequence, 255 residues long: Imidazole glycerol phosphate synthase subunit HisF (255 aa).

Active-site residues include aspartate 11 and aspartate 130.

The protein belongs to the HisA/HisF family. In terms of assembly, heterodimer of HisH and HisF.

The protein resides in the cytoplasm. The catalysed reaction is 5-[(5-phospho-1-deoxy-D-ribulos-1-ylimino)methylamino]-1-(5-phospho-beta-D-ribosyl)imidazole-4-carboxamide + L-glutamine = D-erythro-1-(imidazol-4-yl)glycerol 3-phosphate + 5-amino-1-(5-phospho-beta-D-ribosyl)imidazole-4-carboxamide + L-glutamate + H(+). Its pathway is amino-acid biosynthesis; L-histidine biosynthesis; L-histidine from 5-phospho-alpha-D-ribose 1-diphosphate: step 5/9. In terms of biological role, IGPS catalyzes the conversion of PRFAR and glutamine to IGP, AICAR and glutamate. The HisF subunit catalyzes the cyclization activity that produces IGP and AICAR from PRFAR using the ammonia provided by the HisH subunit. The sequence is that of Imidazole glycerol phosphate synthase subunit HisF from Akkermansia muciniphila (strain ATCC BAA-835 / DSM 22959 / JCM 33894 / BCRC 81048 / CCUG 64013 / CIP 107961 / Muc).